Reading from the N-terminus, the 300-residue chain is Tyrosine recombinase XerC (300 aa).

The Core-binding (CB) domain occupies 2 to 88 (TQEGQLEKRF…SLRSFYTFLL (87 aa)). The 186-residue stretch at 109-294 (RLPKFFYSEE…TKEHLKSTYM (186 aa)) folds into the Tyr recombinase domain. Residues Arg150, Lys174, His246, Arg249, and His272 contribute to the active site. The active-site O-(3'-phospho-DNA)-tyrosine intermediate is Tyr281.

Belongs to the 'phage' integrase family. XerC subfamily. Forms a cyclic heterotetrameric complex composed of two molecules of XerC and two molecules of XerD.

The protein localises to the cytoplasm. Its function is as follows. Site-specific tyrosine recombinase, which acts by catalyzing the cutting and rejoining of the recombining DNA molecules. The XerC-XerD complex is essential to convert dimers of the bacterial chromosome into monomers to permit their segregation at cell division. It also contributes to the segregational stability of plasmids. In Listeria innocua serovar 6a (strain ATCC BAA-680 / CLIP 11262), this protein is Tyrosine recombinase XerC.